A 392-amino-acid polypeptide reads, in one-letter code: ER-bound oxygenase mpaB (392 aa).

Residues 1-21 lie on the Lumenal side of the membrane; the sequence is MSLPLPPALSELARALPYSRT. The chain crosses the membrane as a helical span at residues 22 to 41; that stretch reads QWLPIFVGFLIGYPILIRAL. The Cytoplasmic portion of the chain corresponds to 42 to 392; the sequence is RYKRHGEMKK…WSKYHATTND (351 aa). The segment at 352–376 is disordered; that stretch reads DLGQKKGPQGDPGNDEGIKDLKDGE. The segment covering 367-376 has biased composition (basic and acidic residues); the sequence is EGIKDLKDGE.

This sequence belongs to the mpaB oxygenase family.

It is found in the endoplasmic reticulum membrane. The enzyme catalyses 4-farnesyl-3,5-dihydroxy-6-methylphthalide + AH2 + 2 O2 = (4E,8E)-10-(4,6-dihydroxy-7-methyl-3-oxo-1,3-dihydro-2-benzofuran-5-yl)-4,8-dimethyldeca-4,8-dienoate + acetone + A + H2O + H(+). Its pathway is secondary metabolite biosynthesis; terpenoid biosynthesis. In terms of biological role, ER-bound oxygenase; part of the gene cluster that mediates the biosynthesis of mycophenolic acid (MPA), the first isolated antibiotic natural product in the world obtained from a culture of Penicillium brevicompactum in 1893. MpaB catalyzes the oxidative cleavage the C19-C20 double bond in farnesyl-DHMP (FDHMP) to yield FDHMP-3C via a mycophenolic aldehyde intermediate. The first step of the pathway is the synthesis of 5-methylorsellinic acid (5MOA) by the cytosolic polyketide synthase mpaC. 5MOA is then converted to the phthalide compound 5,7-dihydroxy-4,6-dimethylphthalide (DHMP) by the endoplasmic reticulum-bound cytochrome P450 monooxygenase mpaDE. MpaDE first catalyzes hydroxylation of 5-MOA to 4,6-dihydroxy-2-(hydroxymethyl)-3-methylbenzoic acid (DHMB). MpaDE then acts as a lactone synthase that catalyzes the ring closure to convert DHMB into DHMP. The next step is the prenylation of DHMP by the Golgi apparatus-associated prenyltransferase mpaA to yield farnesyl-DHMP (FDHMP). The ER-bound oxygenase mpaB then mediates the oxidative cleavage the C19-C20 double bond in FDHMP to yield FDHMP-3C via a mycophenolic aldehyde intermediate. The O-methyltransferase mpaG catalyzes the methylation of FDHMP-3C to yield MFDHMP-3C. After the cytosolic methylation of FDHMP-3C, MFDHMP-3C enters into peroxisomes probably via free diffusion due to its low molecular weight. Upon a peroxisomal CoA ligation reaction, catalyzed by a beta-oxidation component enzyme acyl-CoA ligase ACL891, MFDHMP-3C-CoA would then be restricted to peroxisomes for the following beta-oxidation pathway steps. The peroxisomal beta-oxidation machinery than converts MFDHMP-3C-CoA into MPA_CoA, via a beta-oxidation chain-shortening process. Finally mpaH acts as a peroxisomal acyl-CoA hydrolase with high substrate specificity toward MPA-CoA to release the final product MPA. The polypeptide is ER-bound oxygenase mpaB (Penicillium brevicompactum).